The sequence spans 268 residues: Ribosomal RNA small subunit methyltransferase A (268 aa).

S-adenosyl-L-methionine is bound by residues N12, L14, G38, E59, D82, and N107.

It belongs to the class I-like SAM-binding methyltransferase superfamily. rRNA adenine N(6)-methyltransferase family. RsmA subfamily.

The protein localises to the cytoplasm. It catalyses the reaction adenosine(1518)/adenosine(1519) in 16S rRNA + 4 S-adenosyl-L-methionine = N(6)-dimethyladenosine(1518)/N(6)-dimethyladenosine(1519) in 16S rRNA + 4 S-adenosyl-L-homocysteine + 4 H(+). Functionally, specifically dimethylates two adjacent adenosines (A1518 and A1519) in the loop of a conserved hairpin near the 3'-end of 16S rRNA in the 30S particle. May play a critical role in biogenesis of 30S subunits. The sequence is that of Ribosomal RNA small subunit methyltransferase A from Aster yellows witches'-broom phytoplasma (strain AYWB).